Reading from the N-terminus, the 603-residue chain is Beta-glucuronidase (603 aa).

D-glucuronate is bound by residues Asp163 and Asn412. Residue Glu413 is the Proton donor of the active site. D-glucuronate is bound by residues Asn466, Tyr472, Glu504, Trp549, and Lys568. Glu504 serves as the catalytic Nucleophile. The N-K motif signature appears at 566-568 (NKK).

It belongs to the glycosyl hydrolase 2 family. In terms of assembly, homotetramer.

The enzyme catalyses a beta-D-glucuronoside + H2O = D-glucuronate + an alcohol. It catalyses the reaction 4-methylumbelliferone beta-D-glucuronate + H2O = 4-methylumbelliferone + D-glucuronate. Potently inhibited by a set of synthetic compounds like thio-urea derivatives and analogs, and uronic isofagomine (UIFG) derivatives. Inhibitors of gut microbial beta-glucuronidases block the reactivation of glucuronidated cancer drugs, and thereby alleviate drug-induced GI toxicity. Displays beta-glucuronidase activity with the artificial substrate p-nitrophenyl-beta-D-glucuronide (PNPG) and with 4-methylumbelliferyl-glucuronide. Is likely capable of scavenging glucuronate from a range of chemically distinct xenobiotic and endobiotic glucuronides present in the gastrointestinal (GI) tract, to be able to utilize these diverse sources of carbon. As part of the GI microbiome, this enzyme is able to reactivate glucuronide drug conjugates, such reactivated compounds can significantly damage the GI tract. In Escherichia coli (strain K12), this protein is Beta-glucuronidase (uidA).